The following is a 670-amino-acid chain: MSTMIFMYFIYIVLYASGIAANLSYHVHEKRSIPVWWQRVSRIDPHAFLPLTIALAQQNLEHAEDYLLSVSDPSSPQYAQYWTAEAVAAKFAPSEPTARKVMSWLNQSGIAPAGVRRSKSGGELYMNITAQEAEKLLHTTFYIYKHQLTNKTLAICEKYSVATFVEKYVDFITTTEQFHHGLRRRSFQDPEPRMPSGKSPGHYVELADDSFPFPYLSFGSSVGLLKNKILSDSLPSNCDKLITPDCLRALYHIPVRNTSHPDNSLGIIEFTWVGYLESDLDKFFNIFQPSMVGNRPKFESIDGGFIQTLVPSFAFNGEADLDIEYAMALTHPLNITNYQVGDIWSLGNMNNFLASLDSTYCSAVDPVYDPIYPDPTPANPPLPSGYNSSDCGTHKPTKVISISYAYEEGEFSPAYERRQCLEYLKLGLQGVTVVFASGDHGTATRDGMCGNTVIDSNQISDHEPSYVPTFPSTCPYVTSVGGTQVPANGSVLDAEVAFDTIITSSDGNVSSRLTSAGGFSNVFAVPGYQATATRDYLQRLQNKYTLPVNLNVTGFGSGRGFPDVAANAAAYATAVNGKLVKVYGTSASAPVFASVIAWINDARLNMGKQPVGFVNPVLYANPQVLNDVAKGSNYDCANLPAYHASSGWDPVTGLGTPNFDRMLDLFLQLS.

A signal peptide spans 1-20 (MSTMIFMYFIYIVLYASGIA). The propeptide at 21 to 231 (ANLSYHVHEK…VGLLKNKILS (211 aa)) is removed in mature form. In terms of domain architecture, Peptidase S53 spans 241-669 (LITPDCLRAL…DRMLDLFLQL (429 aa)). Catalysis depends on charge relay system residues E318 and D322. N-linked (GlcNAc...) asparagine glycosylation is found at N334, N387, N488, N508, and N551. S586 acts as the Charge relay system in catalysis. Residues D627, V628, G647, and D649 each contribute to the Ca(2+) site.

The cofactor is Ca(2+).

It localises to the secreted. Its subcellular location is the extracellular space. It carries out the reaction Release of an N-terminal tripeptide from a polypeptide.. Secreted tripeptidyl-peptidase which degrades proteins at acidic pHs and is involved in virulence. The protein is Tripeptidyl-peptidase SED1 (SED1) of Arthroderma otae (strain ATCC MYA-4605 / CBS 113480) (Microsporum canis).